Consider the following 148-residue polypeptide: HTH-type transcriptional regulator BilQ (148 aa).

An HTH marR-type domain is found at methionine 1–aspartate 140. The segment at residues leucine 54–glutamine 77 is a DNA-binding region (H-T-H motif).

Transcription regulator that regulates expression of the bilirubin reductase operon (bilQ, bilR and bilS). This Clostridioides difficile (strain CD3) protein is HTH-type transcriptional regulator BilQ.